A 165-amino-acid polypeptide reads, in one-letter code: Cysteine-rich hydrophobic domain-containing protein 2 (165 aa).

Residues 1-26 (MADFDEIYEEEEDEERALEEQLLKYS) are a coiled coil. The CHIC motif (Cys-rich) signature appears at 88–106 (CGCLCCCCTLGCSMWPVIC).

It belongs to the CHIC family. In terms of processing, palmitoylation in the CHIC motif is required for membrane association.

It localises to the membrane. It is found in the golgi apparatus. The protein is Cysteine-rich hydrophobic domain-containing protein 2 (Chic2) of Mus musculus (Mouse).